A 647-amino-acid chain; its full sequence is UvrABC system protein C (647 aa).

In terms of domain architecture, GIY-YIG spans 16–95 (VEPGVYRFRD…IKEFDPRFNI (80 aa)). A UVR domain is found at 208–243 (DRYARDLERKMSAAAEQLDFERAARLRDDLFALKRA).

The protein belongs to the UvrC family. Interacts with UvrB in an incision complex.

It is found in the cytoplasm. Functionally, the UvrABC repair system catalyzes the recognition and processing of DNA lesions. UvrC both incises the 5' and 3' sides of the lesion. The N-terminal half is responsible for the 3' incision and the C-terminal half is responsible for the 5' incision. The protein is UvrABC system protein C of Mycobacterium leprae (strain Br4923).